Consider the following 239-residue polypeptide: THAP domain-containing protein 3 (239 aa).

The THAP-type zinc finger occupies 1–82 (MPKSCAARQC…LKHNAVPTVF (82 aa)). Disordered stretches follow at residues 88 to 125 (PQLVRENTDPTGRSGDATSGERKVLPETGSGECGLGRK) and 139 to 174 (VGGLGAQVPPHTPETSGVPGQPASPPELKRRLPTQP). The HCFC1-binding motif (HBM) signature appears at 176–179 (DHSY).

In terms of assembly, component of a THAP1/THAP3-HCFC1-OGT complex that contains at least, either THAP1 or THAP3, HCFC1 and OGT. Interacts directly with OGT and HCFC1 (via its HBM).

Its function is as follows. Component of a THAP1/THAP3-HCFC1-OGT complex that is required for the regulation of the transcriptional activity of RRM1. The chain is THAP domain-containing protein 3 (THAP3) from Bos taurus (Bovine).